We begin with the raw amino-acid sequence, 313 residues long: Alpha/beta-gliadin clone PW8142 (313 aa).

The signal sequence occupies residues 1-20 (MKTFLILALVATTATTAVRV). A compositionally biased stretch (low complexity) spans 22–55 (VPQLQPKNPSQQQPQEQVPLVQQQQFPGQQQQFP). Disordered regions lie at residues 22 to 122 (VPQL…QQAQ) and 234 to 272 (QQPS…VQPQ). 2 stretches are compositionally biased toward pro residues: residues 56-68 (PQQP…PFPS) and 78-101 (FPQP…PQQP). Composition is skewed to low complexity over residues 102–122 (YPQQ…QQAQ) and 234–264 (QQPS…QNPQ).

Belongs to the gliadin/glutenin family. In terms of processing, substrate of transglutaminase.

In terms of biological role, gliadin is the major seed storage protein in wheat. This Triticum aestivum (Wheat) protein is Alpha/beta-gliadin clone PW8142.